We begin with the raw amino-acid sequence, 432 residues long: Adenylosuccinate synthetase (432 aa).

GTP-binding positions include 12-18 (GDEGKGK) and 40-42 (GHT). Residue D13 is the Proton acceptor of the active site. Mg(2+) contacts are provided by D13 and G40. IMP is bound by residues 13 to 16 (DEGK), 38 to 41 (NAGH), T130, R144, Q225, T240, and R304. The active-site Proton donor is H41. Position 300–306 (300–306 (ATTGRPR)) interacts with substrate. Residues R306, 332–334 (KLD), and 414–416 (SVG) each bind GTP.

It belongs to the adenylosuccinate synthetase family. Homodimer. The cofactor is Mg(2+).

The protein resides in the cytoplasm. It carries out the reaction IMP + L-aspartate + GTP = N(6)-(1,2-dicarboxyethyl)-AMP + GDP + phosphate + 2 H(+). It functions in the pathway purine metabolism; AMP biosynthesis via de novo pathway; AMP from IMP: step 1/2. Functionally, plays an important role in the de novo pathway of purine nucleotide biosynthesis. Catalyzes the first committed step in the biosynthesis of AMP from IMP. The polypeptide is Adenylosuccinate synthetase (Anaeromyxobacter dehalogenans (strain 2CP-C)).